The chain runs to 299 residues: Pyridoxal 5'-phosphate synthase subunit PdxS (299 aa).

A D-ribose 5-phosphate-binding site is contributed by aspartate 24. Lysine 81 (schiff-base intermediate with D-ribose 5-phosphate) is an active-site residue. Glycine 153 contributes to the D-ribose 5-phosphate binding site. Arginine 165 serves as a coordination point for D-glyceraldehyde 3-phosphate. Residues glycine 219 and 240 to 241 (GS) each bind D-ribose 5-phosphate.

This sequence belongs to the PdxS/SNZ family. In terms of assembly, in the presence of PdxT, forms a dodecamer of heterodimers.

The enzyme catalyses aldehydo-D-ribose 5-phosphate + D-glyceraldehyde 3-phosphate + L-glutamine = pyridoxal 5'-phosphate + L-glutamate + phosphate + 3 H2O + H(+). Its pathway is cofactor biosynthesis; pyridoxal 5'-phosphate biosynthesis. Functionally, catalyzes the formation of pyridoxal 5'-phosphate from ribose 5-phosphate (RBP), glyceraldehyde 3-phosphate (G3P) and ammonia. The ammonia is provided by the PdxT subunit. Can also use ribulose 5-phosphate and dihydroxyacetone phosphate as substrates, resulting from enzyme-catalyzed isomerization of RBP and G3P, respectively. In Methanococcus maripaludis (strain C6 / ATCC BAA-1332), this protein is Pyridoxal 5'-phosphate synthase subunit PdxS.